The following is a 146-amino-acid chain: Large ribosomal subunit protein uL15 (146 aa).

A compositionally biased stretch (basic and acidic residues) spans methionine 1–arginine 13. The tract at residues methionine 1 to arginine 60 is disordered. Composition is skewed to gly residues over residues arginine 21–alanine 31 and serine 42–glycine 52.

The protein belongs to the universal ribosomal protein uL15 family. Part of the 50S ribosomal subunit.

In terms of biological role, binds to the 23S rRNA. The polypeptide is Large ribosomal subunit protein uL15 (Lysinibacillus sphaericus (strain C3-41)).